Reading from the N-terminus, the 455-residue chain is Membrane protein Pbs54 (455 aa).

The chain crosses the membrane as a helical span at residues 12 to 32 (IISIIILILRISLFSCAEHLF). Asn-41, Asn-102, and Asn-125 each carry an N-linked (GlcNAc...) asparagine glycan. 6 helical membrane passes run 181-201 (IFLIFLISYMYWFCIKILFNG), 220-240 (FIFFVILKISLIFLPAILSCI), 244-264 (ILTFYFYSISMSPCKDIFYLF), 285-305 (ILIGNVIYNFLCPPKIIIIFI), 312-332 (FLVKIICLTIILFISFLIFFL), and 346-366 (FVFSFTSSYLIVSCFAYFWNI). The N-linked (GlcNAc...) asparagine glycan is linked to Asn-373. The helical transmembrane segment at 398–418 (NMFALFMIFAMSILSIIFPRI) threads the bilayer.

The protein resides in the cell projection. Its subcellular location is the cilium. It localises to the flagellum. The protein localises to the cell membrane. In terms of biological role, plays a role in gamete fertilization. Required for the successful transmission of parasites to mosquito. This Plasmodium berghei (strain Anka) protein is Membrane protein Pbs54.